The following is a 506-amino-acid chain: 26S proteasome non-ATPase regulatory subunit 5 (506 aa).

This sequence belongs to the proteasome subunit S5B/HSM3 family. As to quaternary structure, interacts with PI31; this interaction is increased by PI31 ADP-ribosylation. Interacts with Rpt2.

Its function is as follows. Acts as a chaperone during the assembly of the 26S proteasome. This is 26S proteasome non-ATPase regulatory subunit 5 from Drosophila melanogaster (Fruit fly).